A 229-amino-acid polypeptide reads, in one-letter code: Urease accessory protein UreF (229 aa).

Belongs to the UreF family. In terms of assembly, ureD, UreF and UreG form a complex that acts as a GTP-hydrolysis-dependent molecular chaperone, activating the urease apoprotein by helping to assemble the nickel containing metallocenter of UreC. The UreE protein probably delivers the nickel.

It is found in the cytoplasm. Its function is as follows. Required for maturation of urease via the functional incorporation of the urease nickel metallocenter. This is Urease accessory protein UreF from Staphylococcus aureus (strain MRSA252).